The sequence spans 290 residues: Lipoyl synthase 2 (290 aa).

[4Fe-4S] cluster is bound by residues C37, C42, C48, C63, C67, C70, and S283. Residues 49–272 (YGQKTATFLL…GNIARELGFS (224 aa)) enclose the Radical SAM core domain.

The protein belongs to the radical SAM superfamily. Lipoyl synthase family. It depends on [4Fe-4S] cluster as a cofactor.

The protein localises to the cytoplasm. It carries out the reaction [[Fe-S] cluster scaffold protein carrying a second [4Fe-4S](2+) cluster] + N(6)-octanoyl-L-lysyl-[protein] + 2 oxidized [2Fe-2S]-[ferredoxin] + 2 S-adenosyl-L-methionine + 4 H(+) = [[Fe-S] cluster scaffold protein] + N(6)-[(R)-dihydrolipoyl]-L-lysyl-[protein] + 4 Fe(3+) + 2 hydrogen sulfide + 2 5'-deoxyadenosine + 2 L-methionine + 2 reduced [2Fe-2S]-[ferredoxin]. It participates in protein modification; protein lipoylation via endogenous pathway; protein N(6)-(lipoyl)lysine from octanoyl-[acyl-carrier-protein]: step 2/2. Functionally, catalyzes the radical-mediated insertion of two sulfur atoms into the C-6 and C-8 positions of the octanoyl moiety bound to the lipoyl domains of lipoate-dependent enzymes, thereby converting the octanoylated domains into lipoylated derivatives. The sequence is that of Lipoyl synthase 2 from Thermosynechococcus vestitus (strain NIES-2133 / IAM M-273 / BP-1).